The following is a 396-amino-acid chain: Phosphoglycerate kinase (396 aa).

Residues 22–24 (DLN), arginine 37, 60–63 (HFGR), arginine 118, and arginine 151 each bind substrate. ATP contacts are provided by residues lysine 201, glutamate 323, and 353 to 356 (GGDT).

Belongs to the phosphoglycerate kinase family. As to quaternary structure, monomer.

The protein resides in the cytoplasm. It catalyses the reaction (2R)-3-phosphoglycerate + ATP = (2R)-3-phospho-glyceroyl phosphate + ADP. It functions in the pathway carbohydrate degradation; glycolysis; pyruvate from D-glyceraldehyde 3-phosphate: step 2/5. This Azorhizobium caulinodans (strain ATCC 43989 / DSM 5975 / JCM 20966 / LMG 6465 / NBRC 14845 / NCIMB 13405 / ORS 571) protein is Phosphoglycerate kinase.